A 384-amino-acid chain; its full sequence is D-alanine--D-alanine ligase (384 aa).

The ATP-grasp domain occupies 167-374 (KKLFAAEGLP…YPTLLATMVD (208 aa)). 195–250 (CERLSLPVFVKPARGGSSIGISRVSSWGQLPSAIAYARRHDPKVIVEAAVNGRELE) serves as a coordination point for ATP. Positions 329, 341, and 343 each coordinate Mg(2+).

It belongs to the D-alanine--D-alanine ligase family. It depends on Mg(2+) as a cofactor. Requires Mn(2+) as cofactor.

The protein resides in the cytoplasm. The enzyme catalyses 2 D-alanine + ATP = D-alanyl-D-alanine + ADP + phosphate + H(+). It functions in the pathway cell wall biogenesis; peptidoglycan biosynthesis. In terms of biological role, cell wall formation. In Mycobacterium leprae (strain TN), this protein is D-alanine--D-alanine ligase.